A 252-amino-acid polypeptide reads, in one-letter code: Trans-aconitate 2-methyltransferase (252 aa).

It belongs to the methyltransferase superfamily. Tam family.

Its subcellular location is the cytoplasm. The catalysed reaction is trans-aconitate + S-adenosyl-L-methionine = (E)-3-(methoxycarbonyl)pent-2-enedioate + S-adenosyl-L-homocysteine. Catalyzes the S-adenosylmethionine monomethyl esterification of trans-aconitate. In Escherichia coli O6:K15:H31 (strain 536 / UPEC), this protein is Trans-aconitate 2-methyltransferase.